A 148-amino-acid polypeptide reads, in one-letter code: UPF0178 protein lpl0088 (148 aa).

This sequence belongs to the UPF0178 family.

The chain is UPF0178 protein lpl0088 from Legionella pneumophila (strain Lens).